Reading from the N-terminus, the 176-residue chain is NAD(P)H-quinone oxidoreductase subunit 6, chloroplastic (176 aa).

Helical transmembrane passes span 10-30, 33-53, 61-81, 92-112, and 152-172; these read FLLV…VLLP, IFSA…YILA, AQLL…VMFM, LWTV…FSLI, and FFLP…GAIS.

The protein belongs to the complex I subunit 6 family. As to quaternary structure, NDH is composed of at least 16 different subunits, 5 of which are encoded in the nucleus.

It is found in the plastid. The protein resides in the chloroplast thylakoid membrane. It carries out the reaction a plastoquinone + NADH + (n+1) H(+)(in) = a plastoquinol + NAD(+) + n H(+)(out). The catalysed reaction is a plastoquinone + NADPH + (n+1) H(+)(in) = a plastoquinol + NADP(+) + n H(+)(out). Its function is as follows. NDH shuttles electrons from NAD(P)H:plastoquinone, via FMN and iron-sulfur (Fe-S) centers, to quinones in the photosynthetic chain and possibly in a chloroplast respiratory chain. The immediate electron acceptor for the enzyme in this species is believed to be plastoquinone. Couples the redox reaction to proton translocation, and thus conserves the redox energy in a proton gradient. This chain is NAD(P)H-quinone oxidoreductase subunit 6, chloroplastic (ndhG), found in Arabis hirsuta (Hairy rock-cress).